The chain runs to 760 residues: DNA-directed RNA polymerase subunit beta' (760 aa).

Residues C76, C78, C90, and C93 each contribute to the Zn(2+) site. Mg(2+) is bound by residues D594, D596, and D598.

It belongs to the RNA polymerase beta' chain family. RpoC1 subfamily. In terms of assembly, in plastids the minimal PEP RNA polymerase catalytic core is composed of four subunits: alpha, beta, beta', and beta''. When a (nuclear-encoded) sigma factor is associated with the core the holoenzyme is formed, which can initiate transcription. It depends on Mg(2+) as a cofactor. Zn(2+) serves as cofactor.

Its subcellular location is the plastid. The protein resides in the chloroplast. The enzyme catalyses RNA(n) + a ribonucleoside 5'-triphosphate = RNA(n+1) + diphosphate. DNA-dependent RNA polymerase catalyzes the transcription of DNA into RNA using the four ribonucleoside triphosphates as substrates. This Bigelowiella natans (Pedinomonas minutissima) protein is DNA-directed RNA polymerase subunit beta'.